The chain runs to 210 residues: HTH-type transcriptional repressor FabR (210 aa).

An HTH tetR-type domain is found at 10 to 70 (KTRRSLVEAA…TMVDESGLML (61 aa)). A DNA-binding region (H-T-H motif) is located at residues 33–52 (SLREVAREAGIAPTSFYRHF).

As to quaternary structure, homodimer.

The protein resides in the cytoplasm. Its function is as follows. Represses the transcription of fabB, involved in unsaturated fatty acid (UFA) biosynthesis. By controlling UFA production, FabR directly influences the physical properties of the membrane bilayer. The protein is HTH-type transcriptional repressor FabR of Salmonella paratyphi A (strain ATCC 9150 / SARB42).